A 142-amino-acid chain; its full sequence is MVLSANDKSNVKSIFSKISSHAEEYGAETLERMFTTYPQTKTYFPHFDLHHGSAQVKAHGKKVAAALIEAANHIDDIAGALSKLSDLHAEKLRVDPVNFKLLGQCFMVVVAIHHPSALTPEIHASLDKFLCAVGNVLTSKYR.

In terms of domain architecture, Globin spans 2–142 (VLSANDKSNV…VGNVLTSKYR (141 aa)). His-59 is a binding site for O2. His-88 lines the heme b pocket.

Belongs to the globin family. As to quaternary structure, heterotetramer of two alpha chains and two beta chains. In terms of tissue distribution, red blood cells.

Its function is as follows. Involved in oxygen transport from the lung to the various peripheral tissues. This Aptenodytes forsteri (Emperor penguin) protein is Hemoglobin subunit alpha (HBA).